Here is a 313-residue protein sequence, read N- to C-terminus: Porphobilinogen deaminase (313 aa).

The residue at position 242 (Cys242) is an S-(dipyrrolylmethanemethyl)cysteine.

Belongs to the HMBS family. Monomer. It depends on dipyrromethane as a cofactor.

The enzyme catalyses 4 porphobilinogen + H2O = hydroxymethylbilane + 4 NH4(+). The protein operates within porphyrin-containing compound metabolism; protoporphyrin-IX biosynthesis; coproporphyrinogen-III from 5-aminolevulinate: step 2/4. Functionally, tetrapolymerization of the monopyrrole PBG into the hydroxymethylbilane pre-uroporphyrinogen in several discrete steps. The chain is Porphobilinogen deaminase from Pseudomonas putida (strain GB-1).